The chain runs to 166 residues: Putative transmembrane protein encoded by LINC00477 (166 aa).

Residue N7 is glycosylated (N-linked (GlcNAc...) asparagine). The next 3 helical transmembrane spans lie at 15-35 (VSSF…FFLC), 41-61 (MTGC…VLGP), and 63-83 (PMGM…RFLG). The interval 127–166 (LPVPHPPSPLSKCPQHPRPRRTKGPGLRKLWGPGPPFFPS) is disordered.

The protein resides in the membrane. The chain is Putative transmembrane protein encoded by LINC00477 (LINC00477) from Homo sapiens (Human).